A 347-amino-acid polypeptide reads, in one-letter code: Selenide, water dikinase (347 aa).

C17 is a catalytic residue. ATP contacts are provided by residues K20 and 48 to 50 (TRD). D51 lines the Mg(2+) pocket. Residues D68, D91, and 139 to 141 (GHS) contribute to the ATP site. Position 91 (D91) interacts with Mg(2+). D227 provides a ligand contact to Mg(2+).

Belongs to the selenophosphate synthase 1 family. Class I subfamily. In terms of assembly, homodimer. It depends on Mg(2+) as a cofactor.

It catalyses the reaction hydrogenselenide + ATP + H2O = selenophosphate + AMP + phosphate + 2 H(+). In terms of biological role, synthesizes selenophosphate from selenide and ATP. This is Selenide, water dikinase from Cronobacter sakazakii (strain ATCC BAA-894) (Enterobacter sakazakii).